Reading from the N-terminus, the 465-residue chain is Glutamyl-tRNA reductase 2 (465 aa).

Substrate contacts are provided by residues 62-65 (TCNR), Ser122, 127-129 (EGQ), and Gln133. Cys63 functions as the Nucleophile in the catalytic mechanism. 204-209 (GAGKMG) contacts NADP(+).

This sequence belongs to the glutamyl-tRNA reductase family.

The protein localises to the plastid. It localises to the chloroplast. The enzyme catalyses (S)-4-amino-5-oxopentanoate + tRNA(Glu) + NADP(+) = L-glutamyl-tRNA(Glu) + NADPH + H(+). The protein operates within porphyrin-containing compound metabolism; protoporphyrin-IX biosynthesis; 5-aminolevulinate from L-glutamyl-tRNA(Glu): step 1/2. Functionally, catalyzes the NADPH-dependent reduction of glutamyl-tRNA(Glu) to glutamate 1-semialdehyde (GSA). The sequence is that of Glutamyl-tRNA reductase 2 (HEMA2) from Hordeum vulgare (Barley).